Reading from the N-terminus, the 271-residue chain is Arginine and glutamate-rich protein 1 (271 aa).

Composition is skewed to basic residues over residues 1 to 29 (MGRS…RSRS) and 37 to 58 (VRKR…RSRS). The necessary and sufficient for RNA binding stretch occupies residues 1 to 72 (MGRSRSRSSS…AAASRRERER (72 aa)). The tract at residues 1–112 (MGRSRSRSSS…EKKAEFERQR (112 aa)) is disordered. Residues serine 58 and serine 60 each carry the phosphoserine modification. Threonine 61 is subject to Phosphothreonine. Composition is skewed to basic and acidic residues over residues 66-82 (SRRE…RIDI) and 91-112 (SSLD…ERQR). The segment at 73-271 (ASSPPDRIDI…KLSFSLKTQD (199 aa)) is necessary and sufficient for transcriptional regulation. Serine 74 and serine 75 each carry phosphoserine. Residues 170-174 (LLEEL) carry the LXXLL motif 1; degenerate motif. An LXXLL motif 2; degenerate motif is present at residues 199 to 203 (LERIL). Basic and acidic residues predominate over residues 236 to 251 (MKLEQERQRQQKEEQK). The segment at 236–271 (MKLEQERQRQQKEEQKIILGKGKSRPKLSFSLKTQD) is disordered. Residue serine 264 is modified to Phosphoserine.

The protein belongs to the ARGLU1 family. Interacts with MED1; the interaction is direct. Interacts with PUF60, U2AF2 and JMJD6; may interact with other proteins involved in RNA processing and splicing. As to expression, high expression levels in the neocortex, hippocampus and thalamus but low expression levels in the midbrain and hindbrain (at protein level). Ubiquitously expressed with highest expression levels in the central nervous system and low expression in uterus and pancreas.

It localises to the nucleus. Its subcellular location is the nucleus speckle. The protein localises to the chromosome. Dual function regulator of gene expression; regulator of transcription and modulator of alternative splicing. General coactivator of nuclear receptor-induced gene expression, including genes activated by the glucocorticoid receptor NR3C1. Binds to a subset of pre-mRNAs and to components of the spliceosome machinery to directly modulate basal alternative splicing; involved in simple and complex cassette exon splicing events. Binds its own pre-mRNA and regulates its alternative splicing and degradation; one of the alternatively spliced products is a stable intronic sequence RNA (sisRNA) that binds the protein to regulate its ability to affect splicing. Binding of the sisRNA stimulates phase separation and localization to nuclear speckles, which may contribute to activation of nuclear receptor-induced gene expression. May also indirectly modulate alternative splicing. Regulates transcription of genes involved in heart development, neuronal cell function, protein localization and chromatin localization. Regulates splicing of genes involved in neurogenesis and chromatin organization. Essential for central nervous system development. Required for the estrogen-dependent expression of ESR1 target genes. Can act in cooperation with MED1. The protein is Arginine and glutamate-rich protein 1 (Arglu1) of Mus musculus (Mouse).